Consider the following 201-residue polypeptide: MARYTGPKTKIARKFGEAIFGDDKSFEKRNYPPGQHGNNRRRGKKSEYAIQLMEKQKAKYTYGILERQFRNMFEKATRAQGITGEVLLQLCESRLDNVVYRMGVAPSRRAARQLVGHRHITVNGELVNIPSYHLKAGDVVGVREKSKSLAVVQESLSNNSSVYEWISWNSEKKEGTFVAVPGRVQIPENINEQFIVELYSK.

Positions 26–45 (FEKRNYPPGQHGNNRRRGKK) are disordered. The region spanning 93–153 (SRLDNVVYRM…EKSKSLAVVQ (61 aa)) is the S4 RNA-binding domain.

It belongs to the universal ribosomal protein uS4 family. In terms of assembly, part of the 30S ribosomal subunit. Contacts protein S5. The interaction surface between S4 and S5 is involved in control of translational fidelity.

Functionally, one of the primary rRNA binding proteins, it binds directly to 16S rRNA where it nucleates assembly of the body of the 30S subunit. In terms of biological role, with S5 and S12 plays an important role in translational accuracy. In Christiangramia forsetii (strain DSM 17595 / CGMCC 1.15422 / KT0803) (Gramella forsetii), this protein is Small ribosomal subunit protein uS4.